The sequence spans 437 residues: Diaminopimelate decarboxylase (437 aa).

N6-(pyridoxal phosphate)lysine is present on Lys-81. Residues Gly-256 and 298–301 (EPGR) each bind pyridoxal 5'-phosphate. 3 residues coordinate substrate: Arg-301, Arg-337, and Tyr-341. The Proton donor role is filled by Cys-366. Substrate is bound by residues Glu-367 and Tyr-396. Tyr-396 contacts pyridoxal 5'-phosphate.

This sequence belongs to the Orn/Lys/Arg decarboxylase class-II family. LysA subfamily. Homodimer. Pyridoxal 5'-phosphate serves as cofactor.

The enzyme catalyses meso-2,6-diaminopimelate + H(+) = L-lysine + CO2. It functions in the pathway amino-acid biosynthesis; L-lysine biosynthesis via DAP pathway; L-lysine from DL-2,6-diaminopimelate: step 1/1. In terms of biological role, specifically catalyzes the decarboxylation of meso-diaminopimelate (meso-DAP) to L-lysine. The protein is Diaminopimelate decarboxylase of Actinosynnema pretiosum subsp. auranticum.